A 439-amino-acid polypeptide reads, in one-letter code: Damage-control phosphatase ARMT1 (439 aa).

Ala-2 is subject to N-acetylalanine. Ser-4 carries the post-translational modification Phosphoserine. An N6-acetyllysine modification is found at Lys-40. The Mn(2+) site is built by Asp-251 and Asn-252. 251–252 (DN) lines the substrate pocket. Residues Glu-256 and Asp-289 each coordinate S-adenosyl-L-methionine. Residue Asp-289 participates in Mn(2+) binding. Substrate-binding positions include 365-369 (DLNYR) and Lys-402. The short motif at 399 to 402 (RTLK) is the Subfamily III RTxK motif element.

Belongs to the damage-control phosphatase family. Sugar phosphate phosphatase III subfamily. Mn(2+) serves as cofactor. Ni(2+) is required as a cofactor. Post-translationally, automethylated.

The enzyme catalyses beta-D-fructose 1-phosphate + H2O = D-fructose + phosphate. It carries out the reaction beta-D-fructose 6-phosphate = dihydroxyacetone + D-glyceraldehyde 3-phosphate. The catalysed reaction is L-glutamyl-[protein] + S-adenosyl-L-methionine = [protein]-L-glutamate 5-O-methyl ester + S-adenosyl-L-homocysteine. In terms of biological role, metal-dependent phosphatase that shows phosphatase activity against several substrates, including fructose-1-phosphate and fructose-6-phosphate. Its preference for fructose-1-phosphate, a strong glycating agent that causes DNA damage rather than a canonical yeast metabolite, suggests a damage-control function in hexose phosphate metabolism. Has also been shown to have O-methyltransferase activity that methylates glutamate residues of target proteins to form gamma-glutamyl methyl ester residues. Possibly methylates PCNA, suggesting it is involved in the DNA damage response. This is Damage-control phosphatase ARMT1 from Mus musculus (Mouse).